The following is a 35-amino-acid chain: Phospholipase A2 bitanarin (35 aa).

The protein belongs to the phospholipase A2 family. Group II subfamily. Monomer. The cofactor is Ca(2+). Post-translationally, contains 14 disulfide bonds. In terms of tissue distribution, expressed by the venom gland.

It localises to the secreted. The catalysed reaction is a 1,2-diacyl-sn-glycero-3-phosphocholine + H2O = a 1-acyl-sn-glycero-3-phosphocholine + a fatty acid + H(+). Functionally, snake venom phospholipase A2 (PLA2) that is the first competitive blocker of nicotinic acetylcholine receptors (nAChRs). Competes with alpha-bungarotoxin for binding to nAChRs and acetylcholine binding proteins (AChBPs) and blocks acetylcholine-elicited current. PLA2 catalyzes the calcium-dependent hydrolysis of the 2-acyl groups in 3-sn-phosphoglycerides. This chain is Phospholipase A2 bitanarin, found in Bitis arietans (African puff adder).